Here is a 429-residue protein sequence, read N- to C-terminus: Glycine betaine monooxygenase oxygenase subunit (429 aa).

The Rieske domain maps to 56-163; sequence WLIAGMTCEI…VKTAGGYIFI (108 aa). [2Fe-2S] cluster-binding residues include cysteine 98, histidine 100, cysteine 118, and histidine 121. Fe cation is bound by residues histidine 217 and histidine 222.

The protein belongs to the bacterial ring-hydroxylating dioxygenase alpha subunit family. As to quaternary structure, the system is composed of an oxygenase subunit (GbcA) and a reductase subunit (GbcB). It depends on [2Fe-2S] cluster as a cofactor. Fe cation serves as cofactor.

It catalyses the reaction glycine betaine + NADH + O2 + H(+) = N,N-dimethylglycine + formaldehyde + NAD(+) + H2O. Its function is as follows. Involved in degradation of glycine betaine. Part of a Rieske-type oxygenase system that catalyzes the conversion of glycine betaine (GB) to dimethylglycine (DMG). This subunit is the terminal oxygenase component of the system. Required for growth on choline and GB, but not for growth on DMG. In Pseudomonas aeruginosa (strain ATCC 15692 / DSM 22644 / CIP 104116 / JCM 14847 / LMG 12228 / 1C / PRS 101 / PAO1), this protein is Glycine betaine monooxygenase oxygenase subunit.